The chain runs to 687 residues: Probable WRKY transcription factor 2 (687 aa).

Residues 197–276 are disordered; that stretch reads YGNYNNRSSS…AGGAPAEDGY (80 aa). 2 stretches are compositionally biased toward polar residues: residues 199-208 and 219-249; these read NYNNRSSSHQ and NIESSNLYGIETDNQNGQNKTSDVTTNTSLE. The WRKY 1 DNA-binding region spans 267-331; the sequence is AGGAPAEDGY…YKGAHNHLKP (65 aa). Zn(2+) contacts are provided by Cys-298, Cys-303, His-326, and His-328. Disordered regions lie at residues 324-384 and 416-453; these read GAHN…STRF and FSNDEDEDDRGTHGSVSLGYDGGGGGGGGEGDESESKR. Positions 354–379 are enriched in polar residues; it reads RDSAATWVSCNNTQQQGGSNENNVEE. Positions 435 to 444 are enriched in gly residues; it reads YDGGGGGGGG. The segment at residues 481–546 is a DNA-binding region (WRKY 2); the sequence is SDVDILDDGY…YEGKHNHDVP (66 aa). 4 residues coordinate Zn(2+): Cys-512, Cys-517, His-541, and His-543. Positions 537–599 are disordered; it reads YEGKHNHDVP…QVTTNNQSPF (63 aa). Residues 553–565 show a composition bias toward gly residues; it reads HGGGGDSGNGNSG. Residues 578-589 are compositionally biased toward basic and acidic residues; the sequence is HHSEPPRGRFDR. The span at 590–599 shows a compositional bias: polar residues; that stretch reads QVTTNNQSPF.

Belongs to the WRKY group I family. As to expression, low expression in senescent leaves. Expressed in both the unfertilized egg cell and the pollen tube.

It localises to the nucleus. Functionally, transcription factor. Regulates WOX8 and WOX9 expression and basal cell division patterns during early embryogenesis. Interacts specifically with the W box (5'-(T)TGAC[CT]-3'), a frequently occurring elicitor-responsive cis-acting element. Required to repolarize the zygote from a transient symmetric state. The polypeptide is Probable WRKY transcription factor 2 (Arabidopsis thaliana (Mouse-ear cress)).